The following is a 145-amino-acid chain: FAD synthase (145 aa).

Residues 5–6 (TF), 10–13 (HPGH), D92, and Y119 contribute to the ATP site.

The protein belongs to the archaeal FAD synthase family. As to quaternary structure, homodimer. A divalent metal cation is required as a cofactor.

It catalyses the reaction FMN + ATP + H(+) = FAD + diphosphate. It functions in the pathway cofactor biosynthesis; FAD biosynthesis; FAD from FMN: step 1/1. Its function is as follows. Catalyzes the transfer of the AMP portion of ATP to flavin mononucleotide (FMN) to produce flavin adenine dinucleotide (FAD) coenzyme. The polypeptide is FAD synthase (Methanothermus fervidus (strain ATCC 43054 / DSM 2088 / JCM 10308 / V24 S)).